Here is a 613-residue protein sequence, read N- to C-terminus: Dihydroxy-acid dehydratase (613 aa).

Asp81 contacts Mg(2+). A [2Fe-2S] cluster-binding site is contributed by Cys122. Residues Asp123 and Lys124 each contribute to the Mg(2+) site. Lys124 is subject to N6-carboxylysine. Residue Cys193 participates in [2Fe-2S] cluster binding. Residue Glu489 coordinates Mg(2+). The active-site Proton acceptor is the Ser515.

This sequence belongs to the IlvD/Edd family. As to quaternary structure, homodimer. [2Fe-2S] cluster serves as cofactor. It depends on Mg(2+) as a cofactor.

The enzyme catalyses (2R)-2,3-dihydroxy-3-methylbutanoate = 3-methyl-2-oxobutanoate + H2O. The catalysed reaction is (2R,3R)-2,3-dihydroxy-3-methylpentanoate = (S)-3-methyl-2-oxopentanoate + H2O. The protein operates within amino-acid biosynthesis; L-isoleucine biosynthesis; L-isoleucine from 2-oxobutanoate: step 3/4. It participates in amino-acid biosynthesis; L-valine biosynthesis; L-valine from pyruvate: step 3/4. Functionally, functions in the biosynthesis of branched-chain amino acids. Catalyzes the dehydration of (2R,3R)-2,3-dihydroxy-3-methylpentanoate (2,3-dihydroxy-3-methylvalerate) into 2-oxo-3-methylpentanoate (2-oxo-3-methylvalerate) and of (2R)-2,3-dihydroxy-3-methylbutanoate (2,3-dihydroxyisovalerate) into 2-oxo-3-methylbutanoate (2-oxoisovalerate), the penultimate precursor to L-isoleucine and L-valine, respectively. In Pseudomonas putida (strain GB-1), this protein is Dihydroxy-acid dehydratase.